A 151-amino-acid polypeptide reads, in one-letter code: Large ribosomal subunit protein uL13 (151 aa).

Belongs to the universal ribosomal protein uL13 family. Part of the 50S ribosomal subunit.

Its function is as follows. This protein is one of the early assembly proteins of the 50S ribosomal subunit, although it is not seen to bind rRNA by itself. It is important during the early stages of 50S assembly. The chain is Large ribosomal subunit protein uL13 from Petrotoga mobilis (strain DSM 10674 / SJ95).